The sequence spans 342 residues: MSETTLILAIESSCDETSVSIIENGKNILSNIVLSQIESHKRFGGVVPEVASRHHVEGITTTIDEALNSANTTMNDIDAVAVTQGPGLIGALLVGINAAKALAFAYDKPLIPVHHIAGHVYANHLEKPLQFPLIALIVSGGHTELVYMKNHLSFEVIGETRDDAVGEAYDKVARTIGLSYPGGPQVDNLAAHGEDSYDFPRVWLDKNSYDFSFSGLKSAVINKLHNLRQKGEAINEANVATSFQNSVVEVLVGKTIAACKNYNVNQLIVAGGVASNKGLRAHLSSACESNDINLSIPSPKLCTDNAAMIGAAGYYLFKAGVTADMALNGYNHMDIEQCSIES.

Residues H115 and H119 each coordinate Fe cation. Substrate-binding positions include 137 to 141 (IVSGG), D170, G183, D187, and N276. D304 lines the Fe cation pocket.

It belongs to the KAE1 / TsaD family. The cofactor is Fe(2+).

It localises to the cytoplasm. It catalyses the reaction L-threonylcarbamoyladenylate + adenosine(37) in tRNA = N(6)-L-threonylcarbamoyladenosine(37) in tRNA + AMP + H(+). Required for the formation of a threonylcarbamoyl group on adenosine at position 37 (t(6)A37) in tRNAs that read codons beginning with adenine. Is involved in the transfer of the threonylcarbamoyl moiety of threonylcarbamoyl-AMP (TC-AMP) to the N6 group of A37, together with TsaE and TsaB. TsaD likely plays a direct catalytic role in this reaction. This chain is tRNA N6-adenosine threonylcarbamoyltransferase, found in Staphylococcus saprophyticus subsp. saprophyticus (strain ATCC 15305 / DSM 20229 / NCIMB 8711 / NCTC 7292 / S-41).